We begin with the raw amino-acid sequence, 795 residues long: Protocadherin beta-4 (795 aa).

The first 27 residues, 1–27 (MKKLGRIHPNRQVLAFILMVFLSQVRL), serve as a signal peptide directing secretion. Residues 28–689 (EPIRYSVLEE…AQADSLTVYL (662 aa)) lie on the Extracellular side of the membrane. Cadherin domains are found at residues 34–132 (VLEE…SPIF), 137–241 (VLLK…APEF), 246–346 (YGVQ…PPEL), 351–450 (LTSS…APAF), and 455–560 (YTLF…SPFV). Asparagine 183 carries N-linked (GlcNAc...) asparagine glycosylation. 2 N-linked (GlcNAc...) asparagine glycosylation sites follow: asparagine 417 and asparagine 435. Asparagine 566 carries N-linked (GlcNAc...) asparagine glycosylation. Residues 567 to 670 (GSAPCTELVP…LVDGFSQPYL (104 aa)) enclose the Cadherin 6 domain. A helical membrane pass occupies residues 690 to 710 (VVALASVSSLFLFSVLLFVAV). The Cytoplasmic segment spans residues 711–795 (RLCRRSRAAS…PKFRNSLVFS (85 aa)).

The protein localises to the cell membrane. Functionally, potential calcium-dependent cell-adhesion protein. May be involved in the establishment and maintenance of specific neuronal connections in the brain. In Homo sapiens (Human), this protein is Protocadherin beta-4 (PCDHB4).